The sequence spans 98 residues: NADH-ubiquinone oxidoreductase chain 4L (98 aa).

The next 3 helical transmembrane spans lie at 1-21 (MTPV…GLAF), 29-49 (ALLC…LWAL), and 58-78 (VAPM…LALL).

This sequence belongs to the complex I subunit 4L family.

It localises to the mitochondrion membrane. The enzyme catalyses a ubiquinone + NADH + 5 H(+)(in) = a ubiquinol + NAD(+) + 4 H(+)(out). Its function is as follows. Core subunit of the mitochondrial membrane respiratory chain NADH dehydrogenase (Complex I) which catalyzes electron transfer from NADH through the respiratory chain, using ubiquinone as an electron acceptor. Part of the enzyme membrane arm which is embedded in the lipid bilayer and involved in proton translocation. The chain is NADH-ubiquinone oxidoreductase chain 4L (MT-ND4L) from Salmo salar (Atlantic salmon).